The chain runs to 747 residues: MWGFLKRPVVVTADINLSLVALTGMGLLSRLWRLTYPRAVVFDEVYYGQYISFYMKQIFFLDDSGPPFGHMVLALGGYLGGFDGNFLWNRIGAEYSSNVPVWSLRLLPALAGALSVPMAYQIVLELHFSHCAAMGAALLMLIENALITQSRLMLLESVLIFFNLLAVLSYLKFFNCQKHSPFSLSWWFWLTLTGVACSCAVGIKYMGVFTYVLVLGVAAVHAWHLLGDQTLSNVGADVQCCMRPACMGQMQMSQGVCVFCHLLARAVALLVIPVVLYLLFFYVHLILVFRSGPHDQIMSSAFQASLEGGLARITQGQPLEVAFGSQVTLRNVFGKPVPCWLHSHQDTYPMIYENGRGSSHQQQVTCYPFKDVNNWWIVKDPRRHQLVVSSPPRPVRHGDMVQLVHGMTTRSLNTHDVAAPLSPHSQEVSCYIDYNISMPAQNLWRLEIVNRGSDTDVWKTILSEVRFVHVNTSAVLKLSGAHLPDWGYRQLEIVGEKLSRGYHGSTVWNVEEHRYGASQEQRERERELHSPAQVDVSRNLSFMARFSELQWRMLALRSDDSEHKYSSSPLEWVTLDTNIAYWLHPRTSAQIHLLGNIVIWVSGSLALAIYALLSLWYLLRRRRNVHDLPQDAWLRWVLAGALCAGGWAVNYLPFFLMEKTLFLYHYLPALTFQILLLPVVLQHISDHLCRSQLQRSIFSALVVAWYSSACHVSNTLRPLTYGDKSLSPHELKALRWKDSWDILIRKH.

The next 9 helical transmembrane spans lie at 8–28 (PVVV…MGLL), 40–60 (VVFD…QIFF), 68–88 (FGHM…NFLW), 99–119 (VPVW…VPMA), 122–142 (IVLE…LMLI), 154–174 (LLES…LKFF), 183–203 (SLSW…AVGI), 206–226 (MGVF…WHLL), and 269–289 (LLVI…ILVF). MIR domains follow at residues 318-381 (PLEV…VKDP), 392-449 (PRPV…LEIV), and 453-513 (SDTD…VEEH). 3 N-linked (GlcNAc...) asparagine glycosylation sites follow: N435, N471, and N539. 3 consecutive transmembrane segments (helical) span residues 597-617 (IVIW…SLWY), 636-656 (WVLA…PFFL), and 661-681 (LFLY…PVVL).

The protein belongs to the glycosyltransferase 39 family. As to quaternary structure, interacts with POMT2. As to expression, widely expressed. Highly expressed in testis, heart and pancreas. Detected at lower levels in kidney, skeletal muscle, brain, placenta, lung and liver.

It is found in the endoplasmic reticulum membrane. The catalysed reaction is a di-trans,poly-cis-dolichyl beta-D-mannosyl phosphate + L-seryl-[protein] = 3-O-(alpha-D-mannosyl)-L-seryl-[protein] + a di-trans,poly-cis-dolichyl phosphate + H(+). It carries out the reaction a di-trans,poly-cis-dolichyl beta-D-mannosyl phosphate + L-threonyl-[protein] = 3-O-(alpha-D-mannosyl)-L-threonyl-[protein] + a di-trans,poly-cis-dolichyl phosphate + H(+). It participates in protein modification; protein glycosylation. Slightly activated by Mg(2+) and inhibited by both Ca(+) and Mn(2+). EDTA ha no effect on activity in vitro. In terms of biological role, transfers mannosyl residues to the hydroxyl group of serine or threonine residues. Coexpression of both POMT1 and POMT2 is necessary for enzyme activity, expression of either POMT1 or POMT2 alone is insufficient. Essentially dedicated to O-mannosylation of alpha-DAG1 and few other proteins but not of cadherins and protocaherins. This is Protein O-mannosyl-transferase 1 (POMT1) from Homo sapiens (Human).